A 353-amino-acid polypeptide reads, in one-letter code: S-adenosylmethionine:tRNA ribosyltransferase-isomerase (353 aa).

It belongs to the QueA family. In terms of assembly, monomer.

Its subcellular location is the cytoplasm. It carries out the reaction 7-aminomethyl-7-carbaguanosine(34) in tRNA + S-adenosyl-L-methionine = epoxyqueuosine(34) in tRNA + adenine + L-methionine + 2 H(+). Its pathway is tRNA modification; tRNA-queuosine biosynthesis. In terms of biological role, transfers and isomerizes the ribose moiety from AdoMet to the 7-aminomethyl group of 7-deazaguanine (preQ1-tRNA) to give epoxyqueuosine (oQ-tRNA). The chain is S-adenosylmethionine:tRNA ribosyltransferase-isomerase from Rickettsia bellii (strain OSU 85-389).